Here is a 392-residue protein sequence, read N- to C-terminus: Bone morphogenetic protein 15 (392 aa).

The signal sequence occupies residues 1 to 25 (MALLTILRILLWGVVLFMEQRVQMA). The propeptide occupies 26–267 (KPGWPSTALL…ESSFLMRSVR (242 aa)). N-linked (GlcNAc...) asparagine glycans are attached at residues Asn-85, Asn-213, Asn-236, Asn-349, and Asn-373. 3 disulfides stabilise this stretch: Cys-291-Cys-357, Cys-320-Cys-389, and Cys-324-Cys-391.

Belongs to the TGF-beta family. In terms of assembly, homodimer. But, in contrast to other members of this family, cannot be disulfide-linked. As to expression, ovary specific.

The protein resides in the secreted. In terms of biological role, may be involved in follicular development. Oocyte-specific growth/differentiation factor that stimulates folliculogenesis and granulosa cell (GC) growth. This Mus musculus (Mouse) protein is Bone morphogenetic protein 15 (Bmp15).